Consider the following 779-residue polypeptide: Chloride channel protein CLC-c (779 aa).

Serine 27 bears the Phosphoserine mark. 12 helical membrane passes run threonine 92–leucine 112, phenylalanine 142–isoleucine 162, serine 190–glycine 210, methionine 215–arginine 235, glycine 257–leucine 277, alanine 287–isoleucine 307, leucine 341–valine 361, isoleucine 380–leucine 400, leucine 466–proline 486, glycine 488–leucine 508, serine 520–valine 540, and isoleucine 541–isoleucine 561. The CBS 1 domain maps to aspartate 601 to glutamine 659. Serine 672 bears the Phosphoserine mark. One can recognise a CBS 2 domain in the interval isoleucine 713 to proline 777. A helical transmembrane segment spans residues histidine 741–histidine 761.

It belongs to the chloride channel (TC 2.A.49) family. In terms of assembly, homodimer. Interacts with PP2A5. In terms of tissue distribution, broadly expressed in the plant.

The protein localises to the membrane. Its function is as follows. Voltage-gated chloride channel. This is Chloride channel protein CLC-c (CLC-C) from Arabidopsis thaliana (Mouse-ear cress).